Reading from the N-terminus, the 256-residue chain is 7-cyano-7-deazaguanine synthase (256 aa).

Residues 1–22 (MTDASADALTSPSNSGASQDTS) are disordered. The span at 8 to 22 (ALTSPSNSGASQDTS) shows a compositional bias: polar residues. Residue 30–40 (LSGGLDSVTCL) participates in ATP binding. Zn(2+) is bound by residues C220, C230, C233, and C236.

This sequence belongs to the QueC family. Requires Zn(2+) as cofactor.

It catalyses the reaction 7-carboxy-7-deazaguanine + NH4(+) + ATP = 7-cyano-7-deazaguanine + ADP + phosphate + H2O + H(+). It functions in the pathway purine metabolism; 7-cyano-7-deazaguanine biosynthesis. Catalyzes the ATP-dependent conversion of 7-carboxy-7-deazaguanine (CDG) to 7-cyano-7-deazaguanine (preQ(0)). This Psychrobacter sp. (strain PRwf-1) protein is 7-cyano-7-deazaguanine synthase.